We begin with the raw amino-acid sequence, 110 residues long: Insulin-2 (110 aa).

The first 24 residues, 1-24, serve as a signal peptide directing secretion; it reads MALWMRFLPLLALLFLWESHPTQA. 3 cysteine pairs are disulfide-bonded: Cys-31–Cys-96, Cys-43–Cys-109, and Cys-95–Cys-100. Residues 57–87 constitute a propeptide, c peptide; sequence EVEDPQVAQLELGGGPGAGDLQTLALEVAQQ.

The protein belongs to the insulin family. As to quaternary structure, heterodimer of a B chain and an A chain linked by two disulfide bonds.

It is found in the secreted. Its function is as follows. Insulin decreases blood glucose concentration. It increases cell permeability to monosaccharides, amino acids and fatty acids. It accelerates glycolysis, the pentose phosphate cycle, and glycogen synthesis in liver. The protein is Insulin-2 (Ins2) of Mus musculus (Mouse).